The chain runs to 569 residues: 2-succinyl-5-enolpyruvyl-6-hydroxy-3-cyclohexene-1-carboxylate synthase (569 aa).

This sequence belongs to the TPP enzyme family. MenD subfamily. In terms of assembly, homodimer. Requires Mg(2+) as cofactor. The cofactor is Mn(2+). Thiamine diphosphate serves as cofactor.

It catalyses the reaction isochorismate + 2-oxoglutarate + H(+) = 5-enolpyruvoyl-6-hydroxy-2-succinyl-cyclohex-3-ene-1-carboxylate + CO2. It functions in the pathway quinol/quinone metabolism; 1,4-dihydroxy-2-naphthoate biosynthesis; 1,4-dihydroxy-2-naphthoate from chorismate: step 2/7. It participates in quinol/quinone metabolism; menaquinone biosynthesis. In terms of biological role, catalyzes the thiamine diphosphate-dependent decarboxylation of 2-oxoglutarate and the subsequent addition of the resulting succinic semialdehyde-thiamine pyrophosphate anion to isochorismate to yield 2-succinyl-5-enolpyruvyl-6-hydroxy-3-cyclohexene-1-carboxylate (SEPHCHC). The protein is 2-succinyl-5-enolpyruvyl-6-hydroxy-3-cyclohexene-1-carboxylate synthase of Shewanella halifaxensis (strain HAW-EB4).